The primary structure comprises 156 residues: 6,7-dimethyl-8-ribityllumazine synthase (156 aa).

Residues phenylalanine 23, 57-59 (AFE), and 81-83 (AVI) each bind 5-amino-6-(D-ribitylamino)uracil. (2S)-2-hydroxy-3-oxobutyl phosphate is bound at residue 86–87 (AT). Histidine 89 acts as the Proton donor in catalysis. 5-amino-6-(D-ribitylamino)uracil is bound at residue phenylalanine 114. Arginine 128 lines the (2S)-2-hydroxy-3-oxobutyl phosphate pocket.

The protein belongs to the DMRL synthase family.

The catalysed reaction is (2S)-2-hydroxy-3-oxobutyl phosphate + 5-amino-6-(D-ribitylamino)uracil = 6,7-dimethyl-8-(1-D-ribityl)lumazine + phosphate + 2 H2O + H(+). It functions in the pathway cofactor biosynthesis; riboflavin biosynthesis; riboflavin from 2-hydroxy-3-oxobutyl phosphate and 5-amino-6-(D-ribitylamino)uracil: step 1/2. Its function is as follows. Catalyzes the formation of 6,7-dimethyl-8-ribityllumazine by condensation of 5-amino-6-(D-ribitylamino)uracil with 3,4-dihydroxy-2-butanone 4-phosphate. This is the penultimate step in the biosynthesis of riboflavin. This Campylobacter concisus (strain 13826) protein is 6,7-dimethyl-8-ribityllumazine synthase.